The sequence spans 156 residues: Small ribosomal subunit protein uS7 (156 aa).

It belongs to the universal ribosomal protein uS7 family. In terms of assembly, part of the 30S ribosomal subunit. Contacts proteins S9 and S11.

One of the primary rRNA binding proteins, it binds directly to 16S rRNA where it nucleates assembly of the head domain of the 30S subunit. Is located at the subunit interface close to the decoding center, probably blocks exit of the E-site tRNA. This chain is Small ribosomal subunit protein uS7, found in Pectobacterium atrosepticum (strain SCRI 1043 / ATCC BAA-672) (Erwinia carotovora subsp. atroseptica).